The sequence spans 457 residues: tRNA modification GTPase MnmE (457 aa).

(6S)-5-formyl-5,6,7,8-tetrahydrofolate contacts are provided by R22, E83, and R122. In terms of domain architecture, TrmE-type G spans 219–378 (GLATAIIGRP…LEEAIKALFF (160 aa)). N229 is a K(+) binding site. GTP contacts are provided by residues 229–234 (NVGKSS), 248–254 (TDIAGTT), and 273–276 (DTAG). A Mg(2+)-binding site is contributed by S233. The K(+) site is built by T248, I250, and T253. T254 lines the Mg(2+) pocket. (6S)-5-formyl-5,6,7,8-tetrahydrofolate is bound at residue K457.

Belongs to the TRAFAC class TrmE-Era-EngA-EngB-Septin-like GTPase superfamily. TrmE GTPase family. As to quaternary structure, homodimer. Heterotetramer of two MnmE and two MnmG subunits. K(+) serves as cofactor.

It is found in the cytoplasm. In terms of biological role, exhibits a very high intrinsic GTPase hydrolysis rate. Involved in the addition of a carboxymethylaminomethyl (cmnm) group at the wobble position (U34) of certain tRNAs, forming tRNA-cmnm(5)s(2)U34. In Listeria innocua serovar 6a (strain ATCC BAA-680 / CLIP 11262), this protein is tRNA modification GTPase MnmE.